A 1292-amino-acid chain; its full sequence is ABC multidrug transporter MDR5 (1292 aa).

Residues 1-43 (MTEEPKPVTPVLRDGEAGLDTTAPTEAGSLGEEAPKKEADGIV) are disordered. 2 consecutive transmembrane segments (helical) span residues 79–99 (ICGFFAAVASGTALPLMTIIF) and 128–148 (LWFVYLFIGKFALVYIHTICF). The region spanning 81–370 (GFFAAVASGT…IAPTLGEFTK (290 aa)) is the ABC transmembrane type-1 1 domain. N149 carries an N-linked (GlcNAc...) asparagine glycan. 4 helical membrane passes run 202–222 (VGTCCQGVAMLISAFVVAFTQ), 226–246 (LTLPVATSIPTAVTLVGITVA), 314–334 (EFFIMYCAYALAFWYGIKLLL), and 344–364 (ILTVLFSIVIGTSSLTMIAPT). Positions 405–650 (LELSNAVFSY…KGQYWSLVNA (246 aa)) constitute an ABC transporter 1 domain. ATP is bound at residue 440–447 (GASGSGKS). N494 is a glycosylation site (N-linked (GlcNAc...) asparagine). Residues 656 to 691 (ASDDSSSDTDKETDTQPAEILEKHATTKSTHSKVPH) form a disordered region. Positions 663–680 (DTDKETDTQPAEILEKHA) are enriched in basic and acidic residues. Helical transmembrane passes span 720–740 (HWLFFLLGGIASVVSGGAFPA) and 768–788 (LMFFVLALCILLTYASIGFFL). The ABC transmembrane type-1 2 domain maps to 725–1012 (LLGGIASVVS…IFGFTMNTTK (288 aa)). An N-linked (GlcNAc...) asparagine glycan is attached at N820. Transmembrane regions (helical) follow at residues 844-864 (IGLILIVIVSLLAVSLLALVT), 866-886 (WKLALVSLFGCLPPLFLAGFI), 949-969 (IAMIFFGFSDSVDTAAMALAF), and 986-1006 (FFVIFIAVIFGGQAAGFIFGF). N-linked (GlcNAc...) asparagine glycosylation is found at N1009, N1031, and N1052. The region spanning 1048–1285 (VEFRNVSFSY…KGRYFEMCKA (238 aa)) is the ABC transporter 2 domain. 1083–1090 (GPSGCGKT) contacts ATP.

It belongs to the ABC transporter superfamily. ABCB family. Multidrug resistance exporter (TC 3.A.1.201) subfamily.

Its subcellular location is the cell membrane. The enzyme catalyses itraconazole(in) + ATP + H2O = itraconazole(out) + ADP + phosphate + H(+). Functionally, pleiotropic ABC efflux transporter involved in the modulation susceptibility to itraconazole. The protein is ABC multidrug transporter MDR5 of Trichophyton rubrum (strain ATCC MYA-4607 / CBS 118892) (Athlete's foot fungus).